The primary structure comprises 482 residues: Glutamate-rich WD repeat-containing protein 1 (482 aa).

Disordered stretches follow at residues 1 to 75 (MSSK…WRAG) and 148 to 180 (QLHK…EDKD). Acidic residues-rich tracts occupy residues 27 to 63 (NGED…DNDG) and 157 to 180 (EDSD…EDKD). WD repeat units lie at residues 191 to 231 (NHNG…KALD), 294 to 334 (GHTE…PAIT), 337 to 377 (AHTA…DNSP), 383 to 423 (YHTG…DTEE), and 446 to 482 (QGQH…NSEE).

It localises to the nucleus. It is found in the nucleolus. In Dictyostelium discoideum (Social amoeba), this protein is Glutamate-rich WD repeat-containing protein 1 (grwd1).